Consider the following 952-residue polypeptide: Pentatricopeptide repeat-containing protein At5g04810, chloroplastic (952 aa).

A chloroplast-targeting transit peptide spans 1–60 (MDNGGSVLSLSAPHFPYSATILRRHSPVASISFSLKQPPPQPPEPPESPPDLRRPEKSIG). Disordered stretches follow at residues 30 to 95 (SISF…VSPL) and 115 to 163 (LRLS…EFRQ). Residues 37 to 49 (QPPPQPPEPPESP) are compositionally biased toward pro residues. The span at 58 to 68 (SIGSSSSSSSP) shows a compositional bias: low complexity. Pro residues predominate over residues 122-133 (SPPPPPPPPPPV). A compositionally biased stretch (basic and acidic residues) spans 137 to 163 (TQFRDEFRSDTKPPEEETRNPQQEFRQ). The 72-residue stretch at 167 to 238 (IFVGNLPTWI…VEFHGRILTV (72 aa)) folds into the RRM domain. Basic and acidic residues predominate over residues 259 to 280 (EGEEDTKMSNKSSWHQEREGSR). The interval 259–281 (EGEEDTKMSNKSSWHQEREGSRK) is disordered. PPR repeat units lie at residues 308–342 (SRTE…GITP), 343–377 (TSRI…GIEM), 378–412 (SLVT…HKTL), 413–447 (NASI…GIDA), 448–482 (PIAI…GFTP), 483–517 (TVVT…GVKH), 518–552 (NLKT…GMKP), 553–587 (DVIL…RHRP), 588–622 (TTRT…GCVP), 623–657 (TVHT…GVSA), 658–692 (NEHT…GLDV), 693–727 (DIFT…NIPR), 728–762 (NSFV…GVKP), 763–797 (DIHT…GVKP), and 798–832 (NIKT…GIKP). Residues 918 to 952 (DQVSDVDSDEDDVDGEDGEDDEDVNSVSDLLSPYK) form a disordered region. The span at 921–941 (SDVDSDEDDVDGEDGEDDEDV) shows a compositional bias: acidic residues.

Belongs to the PPR family. P subfamily.

It is found in the plastid. The protein resides in the chloroplast. Its function is as follows. May play a role in the plastid ribosome biogenesis. The protein is Pentatricopeptide repeat-containing protein At5g04810, chloroplastic (PPR4) of Arabidopsis thaliana (Mouse-ear cress).